A 381-amino-acid polypeptide reads, in one-letter code: Protein-glutamate methylesterase/protein-glutamine glutaminase (381 aa).

Residues 20–138 form the Response regulatory domain; it reads RVMVVDDSVV…EIAAADIFKH (119 aa). A 4-aspartylphosphate modification is found at aspartate 71. Positions 154–176 are disordered; it reads PAALASAREPEPRPIQATPVPAH. The region spanning 183-373 is the CheB-type methylesterase domain; the sequence is PFSTHAPRAL…PLQQIAPKLV (191 aa). Active-site residues include serine 197, histidine 225, and aspartate 321.

Belongs to the CheB family. In terms of processing, phosphorylated by CheA. Phosphorylation of the N-terminal regulatory domain activates the methylesterase activity.

Its subcellular location is the cytoplasm. The catalysed reaction is [protein]-L-glutamate 5-O-methyl ester + H2O = L-glutamyl-[protein] + methanol + H(+). It carries out the reaction L-glutaminyl-[protein] + H2O = L-glutamyl-[protein] + NH4(+). Functionally, involved in chemotaxis. Part of a chemotaxis signal transduction system that modulates chemotaxis in response to various stimuli. Catalyzes the demethylation of specific methylglutamate residues introduced into the chemoreceptors (methyl-accepting chemotaxis proteins or MCP) by CheR. Also mediates the irreversible deamidation of specific glutamine residues to glutamic acid. In Nitrobacter hamburgensis (strain DSM 10229 / NCIMB 13809 / X14), this protein is Protein-glutamate methylesterase/protein-glutamine glutaminase.